The sequence spans 478 residues: Zinc finger and SCAN domain-containing protein 26 (478 aa).

Lys-17 participates in a covalent cross-link: Glycyl lysine isopeptide (Lys-Gly) (interchain with G-Cter in SUMO2). Residues 51 to 133 (CKQFRQLRYE…VVLEDLQLDL (83 aa)) enclose the SCAN box domain. 2 disordered regions span residues 159-181 (GVQE…KGEE) and 200-226 (ESSG…AKPK). Composition is skewed to basic and acidic residues over residues 164–181 (QVRH…KGEE) and 207–226 (EPME…AKPK). A C2H2-type 1; degenerate zinc finger spans residues 231–253 (YKCSEREQRFIQHLDLIEHASTH). 7 C2H2-type zinc fingers span residues 282–304 (HQCH…QKIH), 310–332 (YQCN…LRIH), 338–360 (YLCI…QRIH), 366–388 (CECK…QRIH), 394–416 (HQCN…HRIH), 422–444 (FKCN…VRIH), and 450–472 (YQCS…QRYH).

It localises to the nucleus. Functionally, may be involved in transcriptional regulation. The sequence is that of Zinc finger and SCAN domain-containing protein 26 (ZSCAN26) from Homo sapiens (Human).